We begin with the raw amino-acid sequence, 320 residues long: Glycerol-3-phosphate dehydrogenase [NAD(P)+] (320 aa).

NADPH is bound by residues F11, R30, and K102. Sn-glycerol 3-phosphate-binding residues include K102, G130, and S132. Position 134 (A134) interacts with NADPH. K185, D238, S248, R249, and N250 together coordinate sn-glycerol 3-phosphate. K185 (proton acceptor) is an active-site residue. R249 is a binding site for NADPH. E270 is a binding site for NADPH.

This sequence belongs to the NAD-dependent glycerol-3-phosphate dehydrogenase family.

It is found in the cytoplasm. The enzyme catalyses sn-glycerol 3-phosphate + NAD(+) = dihydroxyacetone phosphate + NADH + H(+). The catalysed reaction is sn-glycerol 3-phosphate + NADP(+) = dihydroxyacetone phosphate + NADPH + H(+). Its pathway is membrane lipid metabolism; glycerophospholipid metabolism. Catalyzes the reduction of the glycolytic intermediate dihydroxyacetone phosphate (DHAP) to sn-glycerol 3-phosphate (G3P), the key precursor for phospholipid synthesis. This chain is Glycerol-3-phosphate dehydrogenase [NAD(P)+], found in Ruegeria sp. (strain TM1040) (Silicibacter sp.).